Reading from the N-terminus, the 322-residue chain is Ribonuclease Z (322 aa).

Residues His-62, His-64, Asp-66, His-67, His-139, Asp-210, and His-268 each contribute to the Zn(2+) site. Asp-66 serves as the catalytic Proton acceptor.

It belongs to the RNase Z family. Homodimer. Zn(2+) serves as cofactor.

The catalysed reaction is Endonucleolytic cleavage of RNA, removing extra 3' nucleotides from tRNA precursor, generating 3' termini of tRNAs. A 3'-hydroxy group is left at the tRNA terminus and a 5'-phosphoryl group is left at the trailer molecule.. Zinc phosphodiesterase, which displays some tRNA 3'-processing endonuclease activity. Probably involved in tRNA maturation, by removing a 3'-trailer from precursor tRNA. This is Ribonuclease Z from Nostoc sp. (strain PCC 7120 / SAG 25.82 / UTEX 2576).